The sequence spans 483 residues: Alginate biosynthesis protein AlgA (483 aa).

It belongs to the mannose-6-phosphate isomerase type 2 family. As to quaternary structure, monomer. It depends on Co(2+) as a cofactor.

It catalyses the reaction D-mannose 6-phosphate = D-fructose 6-phosphate. The catalysed reaction is alpha-D-mannose 1-phosphate + GTP + H(+) = GDP-alpha-D-mannose + diphosphate. Its pathway is nucleotide-sugar biosynthesis; GDP-alpha-D-mannose biosynthesis; GDP-alpha-D-mannose from alpha-D-mannose 1-phosphate (GTP route): step 1/1. The protein operates within nucleotide-sugar biosynthesis; GDP-alpha-D-mannose biosynthesis; alpha-D-mannose 1-phosphate from D-fructose 6-phosphate: step 1/2. Functionally, produces a precursor for alginate polymerization. The alginate layer provides a protective barrier against host immune defenses and antibiotics. This chain is Alginate biosynthesis protein AlgA (algA), found in Pseudomonas syringae pv. tomato (strain ATCC BAA-871 / DC3000).